The sequence spans 423 residues: UDP-N-acetylglucosamine 1-carboxyvinyltransferase 2 (423 aa).

23–24 (KN) is a phosphoenolpyruvate binding site. Arginine 93 lines the UDP-N-acetyl-alpha-D-glucosamine pocket. Cysteine 117 acts as the Proton donor in catalysis. Cysteine 117 carries the post-translational modification 2-(S-cysteinyl)pyruvic acid O-phosphothioketal. UDP-N-acetyl-alpha-D-glucosamine is bound by residues 122–126 (RPIDQ), aspartate 305, and isoleucine 327.

The protein belongs to the EPSP synthase family. MurA subfamily.

Its subcellular location is the cytoplasm. It catalyses the reaction phosphoenolpyruvate + UDP-N-acetyl-alpha-D-glucosamine = UDP-N-acetyl-3-O-(1-carboxyvinyl)-alpha-D-glucosamine + phosphate. The protein operates within cell wall biogenesis; peptidoglycan biosynthesis. Functionally, cell wall formation. Adds enolpyruvyl to UDP-N-acetylglucosamine. The polypeptide is UDP-N-acetylglucosamine 1-carboxyvinyltransferase 2 (Listeria innocua serovar 6a (strain ATCC BAA-680 / CLIP 11262)).